Reading from the N-terminus, the 280-residue chain is 2,3,4,5-tetrahydropyridine-2,6-dicarboxylate N-succinyltransferase (280 aa).

This sequence belongs to the transferase hexapeptide repeat family.

Its subcellular location is the cytoplasm. The enzyme catalyses (S)-2,3,4,5-tetrahydrodipicolinate + succinyl-CoA + H2O = (S)-2-succinylamino-6-oxoheptanedioate + CoA. It participates in amino-acid biosynthesis; L-lysine biosynthesis via DAP pathway; LL-2,6-diaminopimelate from (S)-tetrahydrodipicolinate (succinylase route): step 1/3. In Methylorubrum extorquens (strain PA1) (Methylobacterium extorquens), this protein is 2,3,4,5-tetrahydropyridine-2,6-dicarboxylate N-succinyltransferase.